Reading from the N-terminus, the 67-residue chain is Prokaryotic ubiquitin-like protein Pup (67 aa).

A disordered region spans residues 1–36 (MPQQFEQPQAQQAATQEDDALATTQAAAQTESADQA). The tract at residues 23-61 (TTQAAAQTESADQADVLDDILDDIESTLETNAEEYVNSF) is ARC ATPase binding. Glu-67 is covalently cross-linked (Isoglutamyl lysine isopeptide (Glu-Lys) (interchain with K-? in acceptor proteins)).

This sequence belongs to the prokaryotic ubiquitin-like protein family. As to quaternary structure, strongly interacts with the proteasome-associated ATPase ARC through a hydrophobic interface; the interacting region of Pup lies in its C-terminal half. There is one Pup binding site per ARC hexamer ring.

Its pathway is protein degradation; proteasomal Pup-dependent pathway. In terms of biological role, protein modifier that is covalently attached to lysine residues of substrate proteins, thereby targeting them for proteasomal degradation. The tagging system is termed pupylation. The polypeptide is Prokaryotic ubiquitin-like protein Pup (Bifidobacterium longum (strain DJO10A)).